The primary structure comprises 87 residues: Spermatid-specific protein S1 (87 aa).

The disordered stretch occupies residues 1–36; the sequence is TKSRYRNRRSRPRRRYGRRMRKTRCRRKGRRISRRP.

It localises to the nucleus. Its subcellular location is the chromosome. Involved in nuclear basic protein transition: histones are replaced by spermatid specific proteins which are themselves replaced by protamines in late spermatids. The polypeptide is Spermatid-specific protein S1 (Scyliorhinus canicula (Small-spotted catshark)).